Consider the following 421-residue polypeptide: D-amino acid dehydrogenase (421 aa).

3-17 (VTILGAGVIGVTSAY) lines the FAD pocket.

This sequence belongs to the DadA oxidoreductase family. The cofactor is FAD.

The enzyme catalyses a D-alpha-amino acid + A + H2O = a 2-oxocarboxylate + AH2 + NH4(+). It participates in amino-acid degradation; D-alanine degradation; NH(3) and pyruvate from D-alanine: step 1/1. Functionally, oxidative deamination of D-amino acids. The protein is D-amino acid dehydrogenase of Allorhizobium ampelinum (strain ATCC BAA-846 / DSM 112012 / S4) (Agrobacterium vitis (strain S4)).